Reading from the N-terminus, the 99-residue chain is Cyclin-dependent protein kinase inhibitor SMR7 (99 aa).

Residues 49-70 form a disordered region; sequence ICITPTARGAKTPECPAAPRKR.

Expressed in root meristems after induction.

Probable cyclin-dependent protein kinase (CDK) inhibitor that functions as a repressor of mitosis in the endoreduplication cell cycle. Acts as a potent cell cycle inhibitor, regulating a hydroxyurea-dependent checkpoint in leaves. The protein is Cyclin-dependent protein kinase inhibitor SMR7 of Arabidopsis thaliana (Mouse-ear cress).